The primary structure comprises 1586 residues: Zinc finger protein GLI2 (1586 aa).

Polar residues predominate over residues 1–10 (METSASATAS). A disordered region spans residues 1 to 22 (METSASATASEKQEAKSGILEA). Residue Val-50 forms a Glycyl lysine isopeptide (Lys-Gly) (interchain with G-Cter in SUMO2) linkage. Phosphoserine occurs at positions 149, 234, 236, and 242. Positions 342-367 (SSSSNCLSDTNQNKQSSESAVSSTVN) are enriched in polar residues. The segment at 342-389 (SSSSNCLSDTNQNKQSSESAVSSTVNPVAIHKRSKVKTEPEGLRPASP) is disordered. Ser-388 is subject to Phosphoserine; by DYRK2. A C2H2-type 1 zinc finger spans residues 437–464 (TNCHWEDCTKEYDTQEQLVHHINNEHIH). Residues 475-497 (QACTREQKPFKAQYMLVVHMRRH) form a C2H2-type 2; degenerate zinc finger. C2H2-type zinc fingers lie at residues 503–527 (HKCT…LRSH), 533–558 (YVCE…NRTH), and 564–589 (YICK…KTVH). Disordered regions lie at residues 577–636 (DPSS…TSQA) and 650–716 (SSGL…SAGG). Basic and acidic residues predominate over residues 589–605 (HGPDAHVTKKQRNDVHL). Residues 654-674 (CQSSPGAQSSCSSEPSPLGSA) show a composition bias toward low complexity. A Phosphothreonine modification is found at Thr-725. Disordered regions lie at residues 742 to 879 (DSCS…SGLL), 925 to 1030 (RTLP…RPPS), 1182 to 1215 (QYPG…PSQG), 1421 to 1441 (MGNM…GAPD), and 1469 to 1498 (MRSQ…QVSS). Lys-757 is subject to N6-acetyllysine; by EP300. Residues 791–802 (LSASEVTMLSQL) are compositionally biased toward polar residues. Low complexity-rich tracts occupy residues 809-824 (STST…RRSS) and 947-961 (GHGH…PHEA). The span at 968 to 977 (RASDPVRRPD) shows a compositional bias: basic and acidic residues. Phosphoserine; by DYRK2 is present on Ser-1011. Over residues 1469-1485 (MRSQPPQPQACQDSIQP) the composition is skewed to polar residues.

Belongs to the GLI C2H2-type zinc-finger protein family. In terms of assembly, interaction with ZIC1 and ZIC2. Interacts with STK36. Interacts with SUFU; this inhibits transcriptional activation mediated by GLI2. Interacts (via C-terminal internal region) with FOXC1 (via N-terminus); this interaction is direct and increases GLI2 DNA-binding and transcriptional activity through a smoothened (SMO)-independent Hedgehog (Hh) signaling pathway. Phosphorylated in vitro by ULK3. Phosphorylated by DYRK2; this inhibits GLI2 transcription factor activity and promotes proteasomal degradation of GLI2. In terms of processing, acetylation at Lys-757 inhibits Hh target gene expression, probably by impeding entry into chromatin thus preventing promoter occupancy. In terms of tissue distribution, expressed in breast cancers (at protein level). Isoform 1 and isoform 4 are expressed in HTLV-1-infected T-cell lines (at protein level). Isoform 1 and isoform 2 are strongly expressed in HTLV-1-infected T-cell lines. Isoform 3 and isoform 4 are weakly expressed in HTLV-1-infected T-cell lines.

It localises to the nucleus. The protein resides in the cytoplasm. Its subcellular location is the cell projection. The protein localises to the cilium. Functionally, functions as a transcription regulator in the hedgehog (Hh) pathway. Functions as a transcriptional activator. May also function as transcriptional repressor. Requires STK36 for full transcriptional activator activity. Required for normal embryonic development. Involved in the smoothened (SHH) signaling pathway. Its function is as follows. Acts as a transcriptional activator in T-cell leukemia virus type 1 (HTLV-1)-infected cells in a Tax-dependent manner. Binds to the DNA sequence 5'-GAACCACCCA-3' which is part of the Tax-responsive element (TRE-2S) regulatory element that augments the Tax-dependent enhancer of HTLV-1. In terms of biological role, (Microbial infection) Acts as a transcriptional activators in T-cell leukemia virus type 1 (HTLV-1)-infected cells in a Tax-dependent manner. Binds to the DNA sequence 5'-GAACCACCCA-3' which is part of the Tax-responsive element (TRE-2S) regulatory element that augments the Tax-dependent enhancer of HTLV-1. Functionally, acts as a transcriptional repressor. The polypeptide is Zinc finger protein GLI2 (Homo sapiens (Human)).